Reading from the N-terminus, the 87-residue chain is Acyl-CoA-binding protein (87 aa).

At Ser2 the chain carries N-acetylserine. The ACB domain maps to 2–87; sequence SQADFDKAAE…VEELKKKYGI (86 aa). At Lys8 the chain carries N6-acetyllysine; alternate. At Lys8 the chain carries N6-succinyllysine; alternate. Lys14 provides a ligand contact to an acyl-CoA. N6-succinyllysine is present on Lys17. Position 29 is a phosphotyrosine (Tyr29). An acyl-CoA-binding positions include 29–33, Lys51, Lys55, and Tyr74; that span reads YSHFK. Position 51 is an N6-acetyllysine (Lys51). Lys55 carries the N6-acetyllysine; alternate modification. The residue at position 55 (Lys55) is an N6-succinyllysine; alternate. Position 55 is an N6-(2-hydroxyisobutyryl)lysine; alternate (Lys55). Lys55 carries the N6-malonyllysine; alternate modification. Residue Lys77 is modified to N6-acetyllysine; alternate. Residue Lys77 is modified to N6-succinyllysine; alternate.

Belongs to the ACBP family. As to quaternary structure, monomer.

It localises to the endoplasmic reticulum. It is found in the golgi apparatus. Binds medium- and long-chain acyl-CoA esters with very high affinity and may function as an intracellular carrier of acyl-CoA esters. It is also able to displace diazepam from the benzodiazepine (BZD) recognition site located on the GABA type A receptor. It is therefore possible that this protein also acts as a neuropeptide to modulate the action of the GABA receptor. This chain is Acyl-CoA-binding protein (Dbi), found in Rattus norvegicus (Rat).